Here is a 684-residue protein sequence, read N- to C-terminus: Divalent metal transporter 1 (684 aa).

At 1 to 228 (MEKDFTERST…YRNKLSLYNK (228 aa)) the chain is on the cytoplasmic side. The tract at residues 153–195 (NKRNNNNNNNNNNNNNNNNNNNNNNNNNNNNNNNNSNNVDNRK) is disordered. A compositionally biased stretch (low complexity) spans 156-191 (NNNNNNNNNNNNNNNNNNNNNNNNNNNNNNNNSNNV). Residues 229–247 (LRMCFNYFGPGWIVAIAYL) traverse the membrane as a helical segment. Residues 248-275 (DPGNLCSNLNVGLIRSPDPTLEKDYSGY) lie on the Vacuolar side of the membrane. The chain crosses the membrane as a helical span at residues 276–299 (YLLWIMVYGHMLGFIFQVLSMRLG). Topologically, residues 300-319 (HVTGLDLASLCSKEFDRTTS) are cytoplasmic. A helical membrane pass occupies residues 320-345 (TIIYVLVQIAIWGAHIQAIIGTFIAL). The Vacuolar segment spans residues 346–350 (NLIFG). A helical transmembrane segment spans residues 351–370 (ISVKVAIFYTLFEAIIYSFL). The Cytoplasmic segment spans residues 371–381 (ENKSLGLLENV). A helical transmembrane segment spans residues 382-404 (LSFLVGILAVSFFVNVFMTPINF). The Vacuolar segment spans residues 405–423 (KELAISILYPRIPKGKEID). The chain crosses the membrane as a helical span at residues 424–445 (ALALLGSIISAHIFYLHTNLTA). The Cytoplasmic portion of the chain corresponds to 446-465 (KKKSVICNDLSLRRYNTLGT). The helical transmembrane segment at 466-487 (IESGGSLFLSCLTNCIIVLTFA) threads the bilayer. Residues 488–515 (EVNLKSFERRDQYNLFTAYEVMRKSFGK) are Vacuolar-facing. Residues 516–534 (ISMYIWSFGLLSSGNNSSF) form a helical membrane-spanning segment. The Cytoplasmic portion of the chain corresponds to 535 to 554 (MCEYASKSVVEGFLNKKINT). Residues 555 to 573 (FVRVFTFRLMLFSLLYMFL) form a helical membrane-spanning segment. Over 574-584 (TLNKYTLDQLT) the chain is Vacuolar. A helical membrane pass occupies residues 585–603 (NFINVIQVLLLPMATIPLY). The Cytoplasmic segment spans residues 604–622 (RFSIHENVLGEFRLKKFPK). The helical transmembrane segment at 623–645 (FAVFLIIIAIIISNVLLTFLDFV) threads the bilayer. Residues 646-650 (HKETS) lie on the Vacuolar side of the membrane. Residues 651-673 (LITIFFLVIFSFLYFGFIIYFFN) traverse the membrane as a helical segment. The Cytoplasmic portion of the chain corresponds to 674-684 (IPIKKNYIQRN).

This sequence belongs to the NRAMP (TC 2.A.55) family.

It is found in the vacuole membrane. It carries out the reaction Fe(2+)(in) = Fe(2+)(out). Iron transporter. Required for parasite development during the blood stages. Required for apicoplast biogenesis. Required for mitochondrial polarization. This Plasmodium falciparum (isolate 3D7) protein is Divalent metal transporter 1.